Here is a 188-residue protein sequence, read N- to C-terminus: dCTP deaminase (188 aa).

Residues 111 to 116 (KSTYAR), 135 to 137 (TLE), Gln156, Tyr170, and Gln180 each bind dCTP. Glu137 serves as the catalytic Proton donor/acceptor.

Belongs to the dCTP deaminase family. Homotrimer.

The catalysed reaction is dCTP + H2O + H(+) = dUTP + NH4(+). Its pathway is pyrimidine metabolism; dUMP biosynthesis; dUMP from dCTP (dUTP route): step 1/2. Functionally, catalyzes the deamination of dCTP to dUTP. This is dCTP deaminase from Chromohalobacter salexigens (strain ATCC BAA-138 / DSM 3043 / CIP 106854 / NCIMB 13768 / 1H11).